The chain runs to 520 residues: AAA-ATPase At5g57480 (520 aa).

The N-terminal stretch at 1–24 is a signal peptide; it reads MKEYWTSLASLLGVLAFCQSLMQS. 244 to 251 lines the ATP pocket; sequence GPPGTGKS. Disordered regions lie at residues 307-340 and 467-520; these read KKNS…EEGG and NVKD…TRED. Positions 328 to 340 are enriched in gly residues; that stretch reads SGSGSGGSGEEGG. Residues 497-512 show a composition bias toward acidic residues; that stretch reads QNEDEDHDEEEIELED.

Belongs to the AAA ATPase family. BCS1 subfamily. It depends on Mg(2+) as a cofactor.

The enzyme catalyses ATP + H2O = ADP + phosphate + H(+). The polypeptide is AAA-ATPase At5g57480 (Arabidopsis thaliana (Mouse-ear cress)).